Consider the following 149-residue polypeptide: Large ribosomal subunit protein uL15 (149 aa).

The tract at residues M1–L57 is disordered. The span at I23 to M35 shows a compositional bias: gly residues.

The protein belongs to the universal ribosomal protein uL15 family. As to quaternary structure, part of the 50S ribosomal subunit.

Its function is as follows. Binds to the 23S rRNA. The chain is Large ribosomal subunit protein uL15 from Acaryochloris marina (strain MBIC 11017).